Here is a 401-residue protein sequence, read N- to C-terminus: UPF0283 membrane protein SO_1811 (401 aa).

The tract at residues 1-22 (MSVELLPHSTEPHANGADKSVS) is disordered. The next 3 helical transmembrane spans lie at 99-119 (LARL…VLGL), 129-149 (LFSF…VGVI), and 239-259 (ESAV…IILW).

Belongs to the UPF0283 family.

Its subcellular location is the cell inner membrane. The sequence is that of UPF0283 membrane protein SO_1811 from Shewanella oneidensis (strain ATCC 700550 / JCM 31522 / CIP 106686 / LMG 19005 / NCIMB 14063 / MR-1).